A 330-amino-acid chain; its full sequence is Protein rlx (330 aa).

Positions 220-330 are disordered; sequence LGEDYDKGGL…EKTRGFDLEL (111 aa). Composition is skewed to basic and acidic residues over residues 237-269 and 279-330; these read NEQR…EWAR and QNRE…DLEL.

Its function is as follows. This protein is probably required for relaxation complex formation and plasmid mobilization by conjugative plasmids. This is Protein rlx (rlx) from Staphylococcus aureus.